The chain runs to 374 residues: Flap endonuclease 1 (374 aa).

Positions 1-105 (MGVKGLNKLI…GELEKRLLRR (105 aa)) are N-domain. Residue Asp-34 participates in Mg(2+) binding. Residues Arg-47 and Arg-71 each coordinate DNA. Positions 87, 159, 161, 180, and 182 each coordinate Mg(2+). Positions 123–254 (DHLKFEKRLV…VTAYKLIKEH (132 aa)) are I-domain. Position 159 (Glu-159) interacts with DNA. Residues Gly-232 and Asp-234 each coordinate DNA. Asp-234 lines the Mg(2+) pocket. The segment at 339 to 347 (VQGRLDSFF) is interaction with PCNA. Residues 353–374 (DDGKDKKRKSTAKDTKSKKQKK) form a disordered region.

Belongs to the XPG/RAD2 endonuclease family. FEN1 subfamily. In terms of assembly, interacts with PCNA. Three molecules of RAD27 bind to one PCNA trimer with each molecule binding to one PCNA monomer. PCNA stimulates the nuclease activity without altering cleavage specificity. Mg(2+) serves as cofactor. In terms of processing, phosphorylated. Phosphorylation upon DNA damage induces relocalization to the nuclear plasma.

Its subcellular location is the nucleus. It localises to the nucleolus. It is found in the nucleoplasm. The protein localises to the mitochondrion. Functionally, structure-specific nuclease with 5'-flap endonuclease and 5'-3' exonuclease activities involved in DNA replication and repair. During DNA replication, cleaves the 5'-overhanging flap structure that is generated by displacement synthesis when DNA polymerase encounters the 5'-end of a downstream Okazaki fragment. It enters the flap from the 5'-end and then tracks to cleave the flap base, leaving a nick for ligation. Also involved in the long patch base excision repair (LP-BER) pathway, by cleaving within the apurinic/apyrimidinic (AP) site-terminated flap. Acts as a genome stabilization factor that prevents flaps from equilibrating into structures that lead to duplications and deletions. Also possesses 5'-3' exonuclease activity on nicked or gapped double-stranded DNA, and exhibits RNase H activity. Also involved in replication and repair of rDNA and in repairing mitochondrial DNA. The sequence is that of Flap endonuclease 1 from Candida tropicalis (strain ATCC MYA-3404 / T1) (Yeast).